Here is a 505-residue protein sequence, read N- to C-terminus: ATP synthase subunit alpha (505 aa).

Gly-169–Thr-176 is an ATP binding site.

The protein belongs to the ATPase alpha/beta chains family. As to quaternary structure, F-type ATPases have 2 components, CF(1) - the catalytic core - and CF(0) - the membrane proton channel. CF(1) has five subunits: alpha(3), beta(3), gamma(1), delta(1), epsilon(1). CF(0) has three main subunits: a(1), b(2) and c(9-12). The alpha and beta chains form an alternating ring which encloses part of the gamma chain. CF(1) is attached to CF(0) by a central stalk formed by the gamma and epsilon chains, while a peripheral stalk is formed by the delta and b chains.

Its subcellular location is the cell inner membrane. It catalyses the reaction ATP + H2O + 4 H(+)(in) = ADP + phosphate + 5 H(+)(out). Functionally, produces ATP from ADP in the presence of a proton gradient across the membrane. The alpha chain is a regulatory subunit. The polypeptide is ATP synthase subunit alpha (Desulfosudis oleivorans (strain DSM 6200 / JCM 39069 / Hxd3) (Desulfococcus oleovorans)).